We begin with the raw amino-acid sequence, 294 residues long: Nucleotide-binding protein NT01CX_1284 (294 aa).

8–15 contributes to the ATP binding site; that stretch reads GLSGAGKS. GTP is bound at residue 59 to 62; sequence DIRG.

The protein belongs to the RapZ-like family.

Its function is as follows. Displays ATPase and GTPase activities. In Clostridium novyi (strain NT), this protein is Nucleotide-binding protein NT01CX_1284.